The following is a 197-amino-acid chain: Glycerol-3-phosphate acyltransferase (197 aa).

A run of 6 helical transmembrane segments spans residues 1–21 (MNIL…GFLI), 50–70 (WPAL…VKIA), 77–97 (GLIE…PIWL), 111–131 (MFLA…LIVL), 137–157 (VSLS…FYLG), and 158–178 (KFMH…IWKH).

This sequence belongs to the PlsY family. Probably interacts with PlsX.

Its subcellular location is the cell inner membrane. The enzyme catalyses an acyl phosphate + sn-glycerol 3-phosphate = a 1-acyl-sn-glycero-3-phosphate + phosphate. It functions in the pathway lipid metabolism; phospholipid metabolism. In terms of biological role, catalyzes the transfer of an acyl group from acyl-phosphate (acyl-PO(4)) to glycerol-3-phosphate (G3P) to form lysophosphatidic acid (LPA). This enzyme utilizes acyl-phosphate as fatty acyl donor, but not acyl-CoA or acyl-ACP. This Prochlorococcus marinus (strain MIT 9301) protein is Glycerol-3-phosphate acyltransferase.